A 210-amino-acid polypeptide reads, in one-letter code: Orotate phosphoribosyltransferase (210 aa).

5-phospho-alpha-D-ribose 1-diphosphate-binding positions include R94, K98, H100, and 120–128; that span reads EDLISTGGS. Residue S124 participates in orotate binding.

It belongs to the purine/pyrimidine phosphoribosyltransferase family. PyrE subfamily. As to quaternary structure, homodimer. Requires Mg(2+) as cofactor.

It carries out the reaction orotidine 5'-phosphate + diphosphate = orotate + 5-phospho-alpha-D-ribose 1-diphosphate. Its pathway is pyrimidine metabolism; UMP biosynthesis via de novo pathway; UMP from orotate: step 1/2. Its function is as follows. Catalyzes the transfer of a ribosyl phosphate group from 5-phosphoribose 1-diphosphate to orotate, leading to the formation of orotidine monophosphate (OMP). The chain is Orotate phosphoribosyltransferase from Bacillus cereus (strain ATCC 10987 / NRS 248).